A 91-amino-acid chain; its full sequence is MIVDIYRSAKKEGMYLYVPRNKALDELPEPLMKQFGRADHSMVLVLTPEKKLARASVEKVIESIENQGFYLQMPPPPESYMNEIPNDKMPR.

The YcgL domain occupies 1-85 (MIVDIYRSAK…PPESYMNEIP (85 aa)). The tract at residues 72-91 (QMPPPPESYMNEIPNDKMPR) is disordered.

The protein is YcgL domain-containing protein Sde_1339 of Saccharophagus degradans (strain 2-40 / ATCC 43961 / DSM 17024).